The primary structure comprises 468 residues: MTNAKTLYQKVWDAHIVASPEGEAPVIYVDRHLVHEVTSPQAFSGLKVAGRKLRAPEKTFATMDHNTSTRSASLDALSPMARTQVETLAQNCKDFGVRLYDIHHPNQGIVHVMGPELGITLPGTVIVCGDSHTATHGAFGALAFGIGTSEVEHVLATQTLRQLKAKTMKIEVRGHVTDGVTAKDIVLAIIGKIGMDGGTGYVVEFCGEAIEALSMEGRMTVCNMAIEMGAKAGMVAPDQTTFDYLAGREFAPKDEDWAEAVAYWKAIKTDDGAVFDAVVELDAADIAPQLTWGTNPGQVVAIDGKVPDPLNEANPSTRASMEKALEYIGLSAGTQMTDISINKVFIGSCTNSRIEDLRSAAVHAKGRKVASGVTAIVVPGSGQVKAQAEAEGLDKIFIEAGFEWRLPGCSMCLAMNDDRLEAGDRCASTSNRNFEGRQGRGSRTHLVSPAMAAAAAVAGHFVDIRKPY.

Cysteine 349, cysteine 409, and cysteine 412 together coordinate [4Fe-4S] cluster.

It belongs to the aconitase/IPM isomerase family. LeuC type 1 subfamily. Heterodimer of LeuC and LeuD. [4Fe-4S] cluster serves as cofactor.

The enzyme catalyses (2R,3S)-3-isopropylmalate = (2S)-2-isopropylmalate. Its pathway is amino-acid biosynthesis; L-leucine biosynthesis; L-leucine from 3-methyl-2-oxobutanoate: step 2/4. Its function is as follows. Catalyzes the isomerization between 2-isopropylmalate and 3-isopropylmalate, via the formation of 2-isopropylmaleate. The protein is 3-isopropylmalate dehydratase large subunit of Shewanella baltica (strain OS155 / ATCC BAA-1091).